The following is a 901-amino-acid chain: Protein translocase subunit SecA (901 aa).

ATP is bound by residues glutamine 87, 105–109, and aspartate 512; that span reads GEGKT. The disordered stretch occupies residues 859 to 901; sequence HQDDDSAAAAALAAQTGERKVGRNDPCPCGSGKKYKQCHGRLQ. Zn(2+) is bound by residues cysteine 885, cysteine 887, cysteine 896, and histidine 897. Residues 891–901 are compositionally biased toward basic residues; it reads KKYKQCHGRLQ.

The protein belongs to the SecA family. Monomer and homodimer. Part of the essential Sec protein translocation apparatus which comprises SecA, SecYEG and auxiliary proteins SecDF-YajC and YidC. Zn(2+) serves as cofactor.

Its subcellular location is the cell inner membrane. The protein localises to the cytoplasm. The catalysed reaction is ATP + H2O + cellular proteinSide 1 = ADP + phosphate + cellular proteinSide 2.. Its function is as follows. Part of the Sec protein translocase complex. Interacts with the SecYEG preprotein conducting channel. Has a central role in coupling the hydrolysis of ATP to the transfer of proteins into and across the cell membrane, serving both as a receptor for the preprotein-SecB complex and as an ATP-driven molecular motor driving the stepwise translocation of polypeptide chains across the membrane. This chain is Protein translocase subunit SecA, found in Escherichia coli (strain 55989 / EAEC).